The chain runs to 313 residues: Elongation factor Ts (313 aa).

The interval 82-85 is involved in Mg(2+) ion dislocation from EF-Tu; that stretch reads TDFV.

Belongs to the EF-Ts family.

It localises to the cytoplasm. Functionally, associates with the EF-Tu.GDP complex and induces the exchange of GDP to GTP. It remains bound to the aminoacyl-tRNA.EF-Tu.GTP complex up to the GTP hydrolysis stage on the ribosome. This Nostoc sp. (strain PCC 7120 / SAG 25.82 / UTEX 2576) protein is Elongation factor Ts.